A 573-amino-acid polypeptide reads, in one-letter code: Urease subunit alpha 2 (573 aa).

One can recognise a Urease domain in the interval 135–573 (GGMDTHVHYI…ISLNQLYFFS (439 aa)). Residues histidine 140, histidine 142, and lysine 223 each coordinate Ni(2+). Lysine 223 carries the N6-carboxylysine modification. Histidine 225 contacts substrate. The Ni(2+) site is built by histidine 252 and histidine 278. Histidine 326 (proton donor) is an active-site residue. Aspartate 366 serves as a coordination point for Ni(2+).

This sequence belongs to the metallo-dependent hydrolases superfamily. Urease alpha subunit family. In terms of assembly, heterotrimer of UreA (gamma), UreB (beta) and UreC (alpha) subunits. Three heterotrimers associate to form the active enzyme. It depends on Ni cation as a cofactor. In terms of processing, carboxylation allows a single lysine to coordinate two nickel ions.

It localises to the cytoplasm. It catalyses the reaction urea + 2 H2O + H(+) = hydrogencarbonate + 2 NH4(+). It participates in nitrogen metabolism; urea degradation; CO(2) and NH(3) from urea (urease route): step 1/1. This Brucella melitensis biotype 1 (strain ATCC 23456 / CCUG 17765 / NCTC 10094 / 16M) protein is Urease subunit alpha 2.